An 83-amino-acid polypeptide reads, in one-letter code: Small ribosomal subunit protein eS21 (83 aa).

Belongs to the eukaryotic ribosomal protein eS21 family. In terms of assembly, component of the 40S small ribosomal subunit.

It is found in the cytoplasm. Its subcellular location is the cytosol. The protein resides in the rough endoplasmic reticulum. The chain is Small ribosomal subunit protein eS21 (RpS21) from Ixodes scapularis (Black-legged tick).